The sequence spans 105 residues: MTIMITTGNSFEGKVIKQYLGIVRGIVVRSPTISQGLMGGLKSIVGGKIGAYSQMCEHAREEAFQLMIEHAQALNANGIIAMRYDTGEIGQAGTEVLCYGTAVII.

It belongs to the UPF0145 family.

The polypeptide is UPF0145 protein lpl0253 (Legionella pneumophila (strain Lens)).